The following is a 485-amino-acid chain: ETS translocation variant 4 (485 aa).

Lys-6 participates in a covalent cross-link: Glycyl lysine isopeptide (Lys-Gly) (interchain with G-Cter in SUMO2). Disordered stretches follow at residues 79 to 114 and 135 to 214; these read PDFH…RKPP and IAIK…QHQL. Lys-95 participates in a covalent cross-link: Glycyl lysine isopeptide (Lys-Gly) (interchain with G-Cter in SUMO). Ser-100 carries the phosphoserine modification. Lys-138 participates in a covalent cross-link: Glycyl lysine isopeptide (Lys-Gly) (interchain with G-Cter in SUMO2). Residues Ser-139 and Ser-148 each carry the phosphoserine modification. Low complexity predominate over residues 158 to 171; sequence QQQSLLRASSSSQS. The residue at position 215 (Ser-215) is a Phosphoserine. Residues Lys-227 and Lys-261 each participate in a glycyl lysine isopeptide (Lys-Gly) (interchain with G-Cter in SUMO) cross-link. Lys-323 participates in a covalent cross-link: Glycyl lysine isopeptide (Lys-Gly) (interchain with G-Cter in SUMO2). Positions 342–422 form a DNA-binding region, ETS; that stretch reads LQLWQFLVAL…AGERYVYKFV (81 aa).

This sequence belongs to the ETS family. Post-translationally, sumoylated; enhanced upon ERK/MAP kinase pathway activation it positively regulates the transcriptional activator capacity. Sumoylation at Lys-95 probably requires phosphorylation at Ser-100. Transiently polysumoylated and desumoylated by SENP1. Sumoylation is a prerequisite to polyubiquitination which in turn increases proteasomal-mediated degradation. Probably polyubiquitinated by RNF4 and deubiquitinated by USP2. Epididymis and brain.

The protein localises to the nucleus. Functionally, transcriptional activator. May play a role in keratinocyte differentiation. The sequence is that of ETS translocation variant 4 (Etv4) from Mus musculus (Mouse).